A 494-amino-acid chain; its full sequence is Nuclear distribution protein PAC1 (494 aa).

The LisH domain occupies 14 to 46 (QKNELDKSVLRYLNWNYKQTVRHEHAQDYESVR). A coiled-coil region spans residues 90 to 123 (NSIVRLQKKIIELEQNTETLVSQIKDLNTQVSEL). WD repeat units follow at residues 153-192 (NVES…IPLA), 196-244 (SHTK…CKFQ), 251-292 (GHEH…SLKT), 295-334 (PHSQ…SVGT), 347-395 (HFIE…LMAH), 415-454 (GHLS…HVWE), and 457-492 (HTGF…SNVF).

The protein belongs to the WD repeat LIS1/nudF family. As to quaternary structure, self-associates. Interacts with NDL1 and dynein.

It localises to the cytoplasm. Its subcellular location is the cytoskeleton. The protein resides in the spindle pole. Positively regulates the activity of the minus-end directed microtubule motor protein dynein. Plays a central role in positioning the mitotic spindle at the bud neck during cell division. Targets cytoplasmic dynein to microtubule plus ends, thereby promoting dynein-mediated microtubule sliding along the bud cortex and consequently the movement of the mitotic spindle to the bud neck. In Saccharomyces cerevisiae (strain Lalvin EC1118 / Prise de mousse) (Baker's yeast), this protein is Nuclear distribution protein PAC1.